Here is a 205-residue protein sequence, read N- to C-terminus: MSKRLESKYKINRRLGVNLWGRAKSPVNRREYGPGQHGQRRKQKPSDFSIQLMAKQKLKGYYGNISEKQFRKYYDEAVRRKGDTSENLIGLLERRLDAVVYRLKFAITPFASRQFISHGHVTVNGKKVNIPSYLVKEGDVIEVRDSSKQLAIVLDAVQTGERDTPEYVEVDHRQMKGTFLRTPVLSDVPYPVQMEPNLVVEFYSR.

The interval 26–46 (PVNRREYGPGQHGQRRKQKPS) is disordered. Positions 94–157 (RRLDAVVYRL…KQLAIVLDAV (64 aa)) constitute an S4 RNA-binding domain.

Belongs to the universal ribosomal protein uS4 family. In terms of assembly, part of the 30S ribosomal subunit. Contacts protein S5. The interaction surface between S4 and S5 is involved in control of translational fidelity.

Functionally, one of the primary rRNA binding proteins, it binds directly to 16S rRNA where it nucleates assembly of the body of the 30S subunit. In terms of biological role, with S5 and S12 plays an important role in translational accuracy. This Gluconobacter oxydans (strain 621H) (Gluconobacter suboxydans) protein is Small ribosomal subunit protein uS4.